The following is an 83-amino-acid chain: Sec-independent protein translocase protein TatA (83 aa).

Residues 1-21 (MGSFSIWHWLIVLLIVVMVFG) form a helical membrane-spanning segment. Positions 44–83 (KDGGQSAAATDDKPAAPAGQVTNAQASDKTTIDVEARQKS) are disordered. Residues 63 to 72 (QVTNAQASDK) are compositionally biased toward polar residues. Over residues 73 to 83 (TTIDVEARQKS) the composition is skewed to basic and acidic residues.

This sequence belongs to the TatA/E family. In terms of assembly, the Tat system comprises two distinct complexes: a TatABC complex, containing multiple copies of TatA, TatB and TatC subunits, and a separate TatA complex, containing only TatA subunits. Substrates initially bind to the TatABC complex, which probably triggers association of the separate TatA complex to form the active translocon.

The protein localises to the cell inner membrane. Its function is as follows. Part of the twin-arginine translocation (Tat) system that transports large folded proteins containing a characteristic twin-arginine motif in their signal peptide across membranes. TatA could form the protein-conducting channel of the Tat system. The chain is Sec-independent protein translocase protein TatA from Polaromonas sp. (strain JS666 / ATCC BAA-500).